The following is a 301-amino-acid chain: Phosphatidylglycerol--prolipoprotein diacylglyceryl transferase (301 aa).

Helical transmembrane passes span 10–30, 57–77, 92–112, and 119–139; these read IAFS…LAGF, LLFY…MLFY, VWEG…AVAW, and MHMF…LGFG. Arginine 140 contributes to the a 1,2-diacyl-sn-glycero-3-phospho-(1'-sn-glycerol) binding site. 3 helical membrane-spanning segments follow: residues 202–222, 230–250, and 264–284; these read PSQL…LWLF, YAVS…VEFV, and LTRG…LFWL.

This sequence belongs to the Lgt family.

It is found in the cell inner membrane. The catalysed reaction is L-cysteinyl-[prolipoprotein] + a 1,2-diacyl-sn-glycero-3-phospho-(1'-sn-glycerol) = an S-1,2-diacyl-sn-glyceryl-L-cysteinyl-[prolipoprotein] + sn-glycerol 1-phosphate + H(+). It participates in protein modification; lipoprotein biosynthesis (diacylglyceryl transfer). Catalyzes the transfer of the diacylglyceryl group from phosphatidylglycerol to the sulfhydryl group of the N-terminal cysteine of a prolipoprotein, the first step in the formation of mature lipoproteins. The chain is Phosphatidylglycerol--prolipoprotein diacylglyceryl transferase from Xylella fastidiosa (strain M23).